We begin with the raw amino-acid sequence, 239 residues long: Superoxide dismutase [Mn] 3 (239 aa).

Polar residues predominate over residues 1-19 (ASTQQTPAQSPTASPTVST). The segment at 1–20 (ASTQQTPAQSPTASPTVSTP) is disordered. The N-terminal stretch at 1 to 30 (ASTQQTPAQSPTASPTVSTPVAYVDRPLTA) is a signal peptide. Mn(2+)-binding residues include His57, His112, Asp195, and His199.

The protein belongs to the iron/manganese superoxide dismutase family. In terms of assembly, homodimer. Mn(2+) is required as a cofactor.

The enzyme catalyses 2 superoxide + 2 H(+) = H2O2 + O2. Functionally, destroys superoxide anion radicals which are normally produced within the cells and which are toxic to biological systems. This chain is Superoxide dismutase [Mn] 3 (sodA3), found in Leptolyngbya boryana (Plectonema boryanum).